Reading from the N-terminus, the 262-residue chain is Acyl-[acyl-carrier-protein]--UDP-N-acetylglucosamine O-acyltransferase (262 aa).

The protein belongs to the transferase hexapeptide repeat family. LpxA subfamily. In terms of assembly, homotrimer.

The protein localises to the cytoplasm. The enzyme catalyses a (3R)-hydroxyacyl-[ACP] + UDP-N-acetyl-alpha-D-glucosamine = a UDP-3-O-[(3R)-3-hydroxyacyl]-N-acetyl-alpha-D-glucosamine + holo-[ACP]. It functions in the pathway glycolipid biosynthesis; lipid IV(A) biosynthesis; lipid IV(A) from (3R)-3-hydroxytetradecanoyl-[acyl-carrier-protein] and UDP-N-acetyl-alpha-D-glucosamine: step 1/6. Functionally, involved in the biosynthesis of lipid A, a phosphorylated glycolipid that anchors the lipopolysaccharide to the outer membrane of the cell. The sequence is that of Acyl-[acyl-carrier-protein]--UDP-N-acetylglucosamine O-acyltransferase from Histophilus somni (strain 2336) (Haemophilus somnus).